Consider the following 2601-residue polypeptide: Centrosomal protein of 295 kDa (2601 aa).

A necessary for centriole targeting and microtubule association region spans residues 1–560 (MKRKVVNTHK…KKTQPTGVGI (560 aa)). Residue serine 14 is modified to Phosphoserine. Coiled coils occupy residues 207-273 (KRPD…EDLA) and 500-552 (AARI…KRKK). Phosphoserine is present on residues serine 654 and serine 938. Residues 1008-1029 (PSADTKSGKIQEQHSSKSEKGL) form a disordered region. Over residues 1013 to 1027 (KSGKIQEQHSSKSEK) the composition is skewed to basic and acidic residues. Coiled-coil stretches lie at residues 1053-1082 (LHDSLKLLQEQLTKQRDTLQARHEAQVELL) and 1498-1544 (IQSH…VSSE). Residues 1558 to 1580 (ADSERTQKSFPTKSNDTLPSSHR) form a disordered region. Over residues 1565-1577 (KSFPTKSNDTLPS) the composition is skewed to polar residues. Serine 1637 carries the phosphoserine modification. Positions 1728–1758 (QEKLLVQRQTALQQQIQKHEETLKDFFKDSQ) form a coiled coil. Basic and acidic residues-rich tracts occupy residues 1795-1827 (RHADRNNSDDNHLASEDTSAKQSGEHLEKDLGR), 1985-2003 (FSEHMDDSKQESTTSKEEE), and 2100-2112 (DNRDFYQRSDSSS). Disordered regions lie at residues 1795-1834 (RHADRNNSDDNHLASEDTSAKQSGEHLEKDLGRRSSKPPV), 1979-2004 (LTDPESFSEHMDDSKQESTTSKEEET), and 2085-2117 (HPDFDLSSSSSGISPDNRDFYQRSDSSSESHCA). Threonine 2473 carries the phosphothreonine modification. The ALMS motif stretch occupies residues 2478 to 2601 (SLQEAFIKRK…LEKLRAKNTC (124 aa)). A coiled-coil region spans residues 2556–2581 (RLYNQLAEVKQQKEEKTKQEAYAQNR).

In terms of assembly, interacts (via ALMS motif) with microtubules; this interaction is direct.

The protein localises to the cytoplasm. It localises to the cytoskeleton. It is found in the microtubule organizing center. Its subcellular location is the centrosome. The protein resides in the centriole. The protein localises to the spindle. Centriole-enriched microtubule-binding protein involved in centriole biogenesis. Essential for the generation of the distal portion of new-born centrioles in a CPAP- and CEP120-mediated elongation dependent manner during the cell cycle S/G2 phase after formation of the initiating cartwheel structure. Required for the recruitment of centriolar proteins, such as POC1B, POC5 and CEP135, into the distal portion of centrioles. Also required for centriole-to-centrosome conversion during mitotic progression, but is dispensable for cartwheel removal or centriole disengagement. Binds to and stabilizes centriolar microtubule. May be involved in ciliogenesis. In Homo sapiens (Human), this protein is Centrosomal protein of 295 kDa.